The primary structure comprises 773 residues: Immunoglobulin domain and leucine-rich repeat-containing protein 2 (773 aa).

Positions 1 to 20 are cleaved as a signal peptide; it reads MRKFVFFVVAILIQIHTTTS. The Extracellular portion of the chain corresponds to 21-493; that stretch reads QRNRSSSPSG…DWYSYDVFNS (473 aa). LRR repeat units follow at residues 52-73, 74-96, 97-120, 122-144, 145-167, and 168-191; these read TRNI…KIYG, SNIQ…IFAP, FPQL…VIHP, LKVL…LLSI, FPKI…DTSN, and TKLK…TLRV. Residue N114 is glycosylated (N-linked (GlcNAc...) asparagine). N204 is a glycosylation site (N-linked (GlcNAc...) asparagine). LRR repeat units lie at residues 206-230, 233-251, 252-275, and 296-319; these read STKL…DWKF, LRSL…QLDA, PLLN…ILTP, and PSTV…FIPM. The 131-residue stretch at 349–479 folds into the Ig-like domain; sequence PVYAQTSIRK…GKDYGIYHFR (131 aa). N-linked (GlcNAc...) asparagine glycans are attached at residues N361 and N379. Cysteines 396 and 463 form a disulfide. The chain crosses the membrane as a helical span at residues 494–514; that stretch reads VFWGGLATSLIVCLISFLLNI. At 515–773 the chain is on the cytoplasmic side; it reads TWILTRKSAL…RSPDSPPEKR (259 aa). The interval 725–773 is disordered; sequence VRPGIIPTNAPSIRFTTKPTTSSISNEASTSSPSSSGAHRSPDSPPEKR. Residues 733-745 are compositionally biased toward polar residues; the sequence is NAPSIRFTTKPTT. The span at 746-763 shows a compositional bias: low complexity; the sequence is SSISNEASTSSPSSSGAH. Over residues 764-773 the composition is skewed to basic and acidic residues; it reads RSPDSPPEKR.

Its subcellular location is the membrane. This Caenorhabditis elegans protein is Immunoglobulin domain and leucine-rich repeat-containing protein 2.